Reading from the N-terminus, the 777-residue chain is Myotubularin-related protein 10 (777 aa).

A disordered region spans residues 196–217 (PSGDGGGGGGGGNGAGGGSSQK). Positions 197–214 (SGDGGGGGGGGNGAGGGS) are enriched in gly residues. Residues 221–661 (FETYSDWDRE…THIKLWKLCY (441 aa)) enclose the Myotubularin phosphatase domain. 2 positions are modified to phosphoserine: Ser-607 and Ser-751.

The protein belongs to the protein-tyrosine phosphatase family. Non-receptor class myotubularin subfamily.

This Homo sapiens (Human) protein is Myotubularin-related protein 10 (MTMR10).